Here is a 153-residue protein sequence, read N- to C-terminus: 3-hydroxyacyl-[acyl-carrier-protein] dehydratase FabZ (153 aa).

The active site involves histidine 54.

This sequence belongs to the thioester dehydratase family. FabZ subfamily.

Its subcellular location is the cytoplasm. The enzyme catalyses a (3R)-hydroxyacyl-[ACP] = a (2E)-enoyl-[ACP] + H2O. Its function is as follows. Involved in unsaturated fatty acids biosynthesis. Catalyzes the dehydration of short chain beta-hydroxyacyl-ACPs and long chain saturated and unsaturated beta-hydroxyacyl-ACPs. The polypeptide is 3-hydroxyacyl-[acyl-carrier-protein] dehydratase FabZ (Shewanella loihica (strain ATCC BAA-1088 / PV-4)).